The following is a 436-amino-acid chain: 3-ketoacyl-CoA thiolase (436 aa).

The Acyl-thioester intermediate role is filled by C99. Catalysis depends on proton acceptor residues H392 and C422.

The protein belongs to the thiolase-like superfamily. Thiolase family. In terms of assembly, heterotetramer of two alpha chains (FadJ) and two beta chains (FadI).

The protein resides in the cytoplasm. The catalysed reaction is an acyl-CoA + acetyl-CoA = a 3-oxoacyl-CoA + CoA. It participates in lipid metabolism; fatty acid beta-oxidation. Its function is as follows. Catalyzes the final step of fatty acid oxidation in which acetyl-CoA is released and the CoA ester of a fatty acid two carbons shorter is formed. The polypeptide is 3-ketoacyl-CoA thiolase (Salmonella choleraesuis (strain SC-B67)).